The primary structure comprises 279 residues: Ultraviolet N-glycosylase/AP lyase (279 aa).

One can recognise a HhH domain in the interval 123 to 142 (LEDLVALPGVGRKTAFVVLG). [4Fe-4S] cluster-binding residues include C203, C210, C213, and C219. Positions 256 to 279 (TAGAAGPRPRAGGXAPGLPAQPFR) are disordered.

The protein belongs to the Nth/MutY family. [4Fe-4S] cluster serves as cofactor.

In terms of biological role, DNA repair enzyme that has both DNA N-glycosylase activity and AP-lyase activity. Initiates repair at cis-syn pyrimidine dimers. Proceeds via an imino enzyme:DNA intermediate. In Micrococcus luteus (strain ATCC 4698 / DSM 20030 / JCM 1464 / CCM 169 / CCUG 5858 / IAM 1056 / NBRC 3333 / NCIMB 9278 / NCTC 2665 / VKM Ac-2230) (Micrococcus lysodeikticus), this protein is Ultraviolet N-glycosylase/AP lyase (pdg).